Here is a 314-residue protein sequence, read N- to C-terminus: GTPase Era (314 aa).

Residues 7–188 enclose the Era-type G domain; it reads RCGFAAVIGS…REFIAGLMPE (182 aa). The G1 stretch occupies residues 15-22; that stretch reads GSPNAGKS. 15-22 is a GTP binding site; the sequence is GSPNAGKS. The tract at residues 41 to 45 is G2; sequence QTTRF. Positions 62–65 are G3; that stretch reads DTPG. Residues 62 to 66 and 138 to 141 contribute to the GTP site; these read DTPGV and NKVD. The tract at residues 138-141 is G4; sequence NKVD. Residues 167–169 are G5; the sequence is ISA. Residues 219 to 296 form the KH type-2 domain; that stretch reads LHEELPYASM…HLFLNVKVDA (78 aa).

It belongs to the TRAFAC class TrmE-Era-EngA-EngB-Septin-like GTPase superfamily. Era GTPase family. In terms of assembly, monomer.

The protein resides in the cytoplasm. Its subcellular location is the cell inner membrane. An essential GTPase that binds both GDP and GTP, with rapid nucleotide exchange. Plays a role in 16S rRNA processing and 30S ribosomal subunit biogenesis and possibly also in cell cycle regulation and energy metabolism. This chain is GTPase Era, found in Maricaulis maris (strain MCS10) (Caulobacter maris).